A 162-amino-acid polypeptide reads, in one-letter code: Type IV major fimbrial protein FimA (162 aa).

Positions 1–7 are cleaved as a propeptide — leader sequence; sequence MKSLQKG. Phe8 carries the N-methylphenylalanine modification. A helical transmembrane segment spans residues 8-28; it reads FTLIELMIVVAIIGILAAFAI. Cys63 and Cys106 are oxidised to a cystine.

Belongs to the N-Me-Phe pilin family.

Its subcellular location is the fimbrium. The protein localises to the membrane. Its function is as follows. Major component of the type IV fimbriae that plays an essential role in twitching motility, natural transformation, and protease secretion. This is Type IV major fimbrial protein FimA (fimA) from Dichelobacter nodosus (strain VCS1703A).